The primary structure comprises 339 residues: Heat-inducible transcription repressor HrcA (339 aa).

It belongs to the HrcA family.

In terms of biological role, negative regulator of class I heat shock genes (grpE-dnaK-dnaJ and groELS operons). Prevents heat-shock induction of these operons. This chain is Heat-inducible transcription repressor HrcA, found in Clostridium perfringens (strain SM101 / Type A).